Consider the following 313-residue polypeptide: Chemotaxis protein CheV2 (313 aa).

The CheW-like domain maps to 16–172 (EAQFLCFRLD…VEKMISDVFP (157 aa)). Residues 193–313 (LILIAEDSLS…IHEMLKKTLS (121 aa)) enclose the Response regulatory domain. Position 246 is a 4-aspartylphosphate (aspartate 246).

Phosphorylated; probably by transfer of CheAY phosphate group.

Plays a role in chemotaxis signal transduction system in order to colonize the host stomach. May act as a phosphate sink to control the flow of phosphate to CheAY. This chain is Chemotaxis protein CheV2, found in Helicobacter pylori (strain ATCC 700392 / 26695) (Campylobacter pylori).